Here is a 359-residue protein sequence, read N- to C-terminus: 3-dehydroquinate synthase (359 aa).

NAD(+) is bound by residues 70–75 (DGEQYK), 105–109 (GVIGD), 129–130 (TT), K142, K151, and 169–172 (FYKT). 3 residues coordinate Zn(2+): E184, H247, and H264.

The protein belongs to the sugar phosphate cyclases superfamily. Dehydroquinate synthase family. The cofactor is Co(2+). Requires Zn(2+) as cofactor. NAD(+) serves as cofactor.

It is found in the cytoplasm. The enzyme catalyses 7-phospho-2-dehydro-3-deoxy-D-arabino-heptonate = 3-dehydroquinate + phosphate. The protein operates within metabolic intermediate biosynthesis; chorismate biosynthesis; chorismate from D-erythrose 4-phosphate and phosphoenolpyruvate: step 2/7. Functionally, catalyzes the conversion of 3-deoxy-D-arabino-heptulosonate 7-phosphate (DAHP) to dehydroquinate (DHQ). The protein is 3-dehydroquinate synthase of Francisella tularensis subsp. mediasiatica (strain FSC147).